A 262-amino-acid polypeptide reads, in one-letter code: Probable DNA polymerase sliding clamp 1 (262 aa).

Residues 67–86 (KCEHTYELGVNVLNMFKLLR) mediate DNA binding.

It belongs to the PCNA family.

Sliding clamp subunit. Responsible for tethering the catalytic subunit of DNA polymerase to DNA during high-speed replication. In Chlorella (PBCV-1), this protein is Probable DNA polymerase sliding clamp 1.